The sequence spans 658 residues: Probable mitochondrial Rho GTPase gemA (658 aa).

Topologically, residues 1–633 (MKNNIKVILI…NGSNGSNNSN (633 aa)) are cytoplasmic. The 174-residue stretch at 2 to 175 (KNNIKVILIG…LYASQTSVFF (174 aa)) folds into the Miro 1 domain. GTP is bound by residues 11 to 18 (GDEQVGKS), 57 to 62 (DTFDDG), and 118 to 121 (NKLD). EF-hand domains are found at residues 191-226 (GCER…CGHE) and 311-346 (MGNE…TPKI). 9 residues coordinate Ca(2+): Asp-204, Asp-206, Asp-208, Ser-210, Glu-215, Asp-324, Asp-326, Asp-328, and Asp-335. Residues 420–616 (RNIVNCYVFG…YHEMMETIVN (197 aa)) enclose the Miro 2 domain. GTP is bound by residues 429–436 (GAEAVGKT), 466–468 (LLK), and 530–533 (TKNN). Residues 532–575 (NNNNNNNNNNNNNNNNNNNNLNNNNNNINNNNNNNNNNTTTTNA) are disordered. The helical; Anchor for type IV membrane protein transmembrane segment at 634-656 (ILTYLVIAAGVAGVGLLLSKYLA) threads the bilayer. Residues 657–658 (KK) lie on the Mitochondrial intermembrane side of the membrane.

Belongs to the mitochondrial Rho GTPase family.

It is found in the mitochondrion outer membrane. Functionally, mitochondrial GTPase involved in mitochondrial trafficking. Probably involved in control of anterograde transport of mitochondria and their subcellular distribution. This chain is Probable mitochondrial Rho GTPase gemA (gemA), found in Dictyostelium discoideum (Social amoeba).